The chain runs to 58 residues: Short neurotoxin MS11 (58 aa).

Cystine bridges form between Cys-3–Cys-20, Cys-13–Cys-38, Cys-42–Cys-50, and Cys-51–Cys-56.

It belongs to the three-finger toxin family. Short-chain subfamily. Expressed by the venom gland.

It localises to the secreted. Its function is as follows. Produces peripheral paralysis by blocking neuromuscular transmission at the postsynaptic site. Binds to and inhibits the endogenous nicotinic acetylcholine receptors (nAChR) in the human rhabdomyosarcoma TE 671 cell line with an IC(50) of 266 mM. Not toxic to mice by intraperitoneal injection or to zebrafish by injection at the back dorsolateral region. This chain is Short neurotoxin MS11, found in Micrurus surinamensis (Surinam coral snake).